Reading from the N-terminus, the 88-residue chain is Monensin polyketide synthase acyl carrier protein (88 aa).

Residues 5–82 (PFTLADLQRI…ELIDHVNERL (78 aa)) enclose the Carrier domain. Ser42 is subject to O-(pantetheine 4'-phosphoryl)serine.

Post-translationally, 4'-phosphopantetheine is transferred from CoA to a specific serine of the apo-ACP-like protein.

It participates in antifungal biosynthesis; monensin biosynthesis. In terms of biological role, acyl carrier protein. This is Monensin polyketide synthase acyl carrier protein from Streptomyces virginiae (Streptomyces cinnamonensis).